The sequence spans 333 residues: Gap junction alpha-4 protein (333 aa).

Over 1-20 (MGDWGFLEKLLDQVQEHSTV) the chain is Cytoplasmic. A helical transmembrane segment spans residues 21–40 (VGKIWLTVLFIFRILILGLA). The Extracellular portion of the chain corresponds to 41-76 (GESVWGDEQSDFECNTAQPGCTNVCYDQAFPISHIR). The helical transmembrane segment at 77–99 (YWVLQFLFVSTPTLIYLGHVIYL) threads the bilayer. Topologically, residues 100 to 148 (SRREERLRQKEGELRALPSKDPHVERALAAIEHQMAKISVAEDGRLRIR) are cytoplasmic. A helical transmembrane segment spans residues 149 to 171 (GALMGTYVISVLCKSVLEAGFLY). At 172–208 (GQWRLYGWTMEPVFVCQRAPCPHVVDCYVSRPTEKTI) the chain is on the extracellular side. Residues 209 to 231 (FIIFMLVVGVISLVLNLLELVHL) form a helical membrane-spanning segment. The Cytoplasmic segment spans residues 232–333 (LCRCVSREIK…NSSASKKQYV (102 aa)). Residues 292 to 333 (ANLTTEERLTSTRPPPFVNAAPQGGQKSSSRPNSSASKKQYV) form a disordered region. Low complexity predominate over residues 318 to 333 (KSSSRPNSSASKKQYV).

Belongs to the connexin family. Alpha-type (group II) subfamily. As to quaternary structure, a connexon is composed of a hexamer of connexins. Highly expressed in lung.

Its subcellular location is the cell membrane. The protein localises to the cell junction. It localises to the gap junction. One gap junction consists of a cluster of closely packed pairs of transmembrane channels, the connexons, through which materials of low MW diffuse from one cell to a neighboring cell. This Rattus norvegicus (Rat) protein is Gap junction alpha-4 protein (Gja4).